A 404-amino-acid polypeptide reads, in one-letter code: Probable tRNA sulfurtransferase (404 aa).

Residues 60–165 (QPIVEALKLV…DEAAYISYEE (106 aa)) enclose the THUMP domain. ATP is bound by residues 183–184 (ML), 208–209 (HF), arginine 265, glycine 287, and glutamine 296.

It belongs to the ThiI family.

It localises to the cytoplasm. It catalyses the reaction [ThiI sulfur-carrier protein]-S-sulfanyl-L-cysteine + a uridine in tRNA + 2 reduced [2Fe-2S]-[ferredoxin] + ATP + H(+) = [ThiI sulfur-carrier protein]-L-cysteine + a 4-thiouridine in tRNA + 2 oxidized [2Fe-2S]-[ferredoxin] + AMP + diphosphate. The enzyme catalyses [ThiS sulfur-carrier protein]-C-terminal Gly-Gly-AMP + S-sulfanyl-L-cysteinyl-[cysteine desulfurase] + AH2 = [ThiS sulfur-carrier protein]-C-terminal-Gly-aminoethanethioate + L-cysteinyl-[cysteine desulfurase] + A + AMP + 2 H(+). It functions in the pathway cofactor biosynthesis; thiamine diphosphate biosynthesis. Its function is as follows. Catalyzes the ATP-dependent transfer of a sulfur to tRNA to produce 4-thiouridine in position 8 of tRNAs, which functions as a near-UV photosensor. Also catalyzes the transfer of sulfur to the sulfur carrier protein ThiS, forming ThiS-thiocarboxylate. This is a step in the synthesis of thiazole, in the thiamine biosynthesis pathway. The sulfur is donated as persulfide by IscS. This is Probable tRNA sulfurtransferase from Streptococcus pyogenes serotype M12 (strain MGAS2096).